A 190-amino-acid polypeptide reads, in one-letter code: Biphenyl-2,3-diol 1,2-dioxygenase 2 (190 aa).

A VOC domain is found at 6–124; it reads KFAHVVLQTS…DGNFVELQID (119 aa). Fe cation contacts are provided by His9, His72, and Glu120.

This sequence belongs to the extradiol ring-cleavage dioxygenase family. As to quaternary structure, homohexamer. The cofactor is Fe(2+).

It catalyses the reaction biphenyl-2,3-diol + O2 = 2-hydroxy-6-oxo-6-phenylhexa-2,4-dienoate + H(+). Its pathway is xenobiotic degradation; biphenyl degradation; 2-hydroxy-2,4-pentadienoate and benzoate from biphenyl: step 3/4. The protein is Biphenyl-2,3-diol 1,2-dioxygenase 2 (bphC2) of Rhodococcus globerulus.